Reading from the N-terminus, the 134-residue chain is Small ribosomal subunit protein uS8c (134 aa).

Belongs to the universal ribosomal protein uS8 family. As to quaternary structure, part of the 30S ribosomal subunit.

It localises to the plastid. The protein localises to the chloroplast. Its function is as follows. One of the primary rRNA binding proteins, it binds directly to 16S rRNA central domain where it helps coordinate assembly of the platform of the 30S subunit. This Pelargonium hortorum (Common geranium) protein is Small ribosomal subunit protein uS8c (rps8).